Here is a 757-residue protein sequence, read N- to C-terminus: MDVNPTLLFLKVPAQNAISTTFPYTGDPPYSHGTGTGYTMDTVNRTHQYSERGRWTKNTETGAPQLNPIDGPLPKDNEPSGYAQTDCVLEAMAFLEESHPGIFENSCIETMEVVQQTRVDKLTQGRQTYDWTLNRNQPAATALANTIEVFRSNDLIANESGRLIDFLKDVMESMDREEVEITTHFQRKRRVRDNVTKKMVTQRTIGKKKHKLDKRSYLIRALTLNTMTKDAERGKLKRRAIATPGMQIRGFVYFVETLARSICEKLEQSGLPVGGNEKKAKLANVVRKMMTNSQDTEISFTITGDNTKWNENQNPRMFLAMITYITRNQPEWFRNILSIAPIMFSNKMARLGKGYMFESKSMKLRTQIPAEMLANIDLKYFNDSTKKKIEKIRPLLIDGTASLSPGMMMGMFNMLSTVLGVSILNLGQKRYTKTTYWWDGLQSSDDFALIVNAPNYAGIQAGVDRFYRTCKLLGINMSKKKSYINRTGTFEFTSFFYRYGFVANFSMELPSFGVSGVNESADMSIGVTVIKNNMINNDLGPATAQMALQLFIKDYRYTYRCHRGDTQIQTRRSFEIKKLWDQTRSKAGLLVSDGGPNLYNIRNLHIPEVCLKWELMDEDYQGRLCNPLNPFVSHKEIESVNNAVMMPAHGPAKNMEYDAVATTHSWVPKRNRSILNTSQRGILEDEQMYQRCCNLFEKFFPSSSYRRPVGISSMVEAMVSRARIDARIDFESGRIKKEEFSEIMKTCSTIEDLRRQK.

Residues 53–82 form a disordered region; that stretch reads GRWTKNTETGAPQLNPIDGPLPKDNEPSGY. Short sequence motifs (nuclear localization signal) lie at residues 187-195 and 203-216; these read RKRRVRDNV and RTIG…DKRS. The segment at 249–256 is promoter-binding site; the sequence is RGFVYFVE. The region spanning 286 to 483 is the RdRp catalytic domain; it reads VRKMMTNSQD…GINMSKKKSY (198 aa).

This sequence belongs to the influenza viruses polymerase PB1 family. Influenza RNA polymerase is composed of three subunits: PB1, PB2 and PA. Interacts (via N-terminus) with PA (via C-terminus). Interacts (via C-terminus) with PB2 (via N-terminus); this interaction is essential for transcription initiation. Interacts (via C-terminus) with human PKP2 (via N-terminus); the interaction competitively inhibits the interaction between the RNA polymerase subunits PB1 and PB2. Post-translationally, phosphorylated by host PRKCA.

The protein localises to the host nucleus. Its subcellular location is the host cytoplasm. The catalysed reaction is RNA(n) + a ribonucleoside 5'-triphosphate = RNA(n+1) + diphosphate. Its function is as follows. RNA-dependent RNA polymerase which is responsible for replication and transcription of virus RNA segments. The transcription of viral mRNAs occurs by a unique mechanism called cap-snatching. 5' methylated caps of cellular mRNAs are cleaved after 10-13 nucleotides by PA. In turn, these short capped RNAs are used as primers by PB1 for transcription of viral mRNAs. During virus replication, PB1 initiates RNA synthesis and copy vRNA into complementary RNA (cRNA) which in turn serves as a template for the production of more vRNAs. This is RNA-directed RNA polymerase catalytic subunit from Influenza A virus (strain A/USA:Memphis/10/1996 H1N1).